A 369-amino-acid chain; its full sequence is 3-isopropylmalate dehydrogenase (369 aa).

76–89 is a binding site for NAD(+); it reads GPKWDRNPSHLRPE. Substrate-binding residues include Arg96, Arg106, Arg134, and Asp223. Positions 223, 247, and 251 each coordinate Mg(2+). NAD(+) is bound at residue 281–293; that stretch reads GSAPDIAGQNKAN.

Belongs to the isocitrate and isopropylmalate dehydrogenases family. LeuB type 1 subfamily. In terms of assembly, homodimer. Requires Mg(2+) as cofactor. Mn(2+) is required as a cofactor.

The protein resides in the cytoplasm. It catalyses the reaction (2R,3S)-3-isopropylmalate + NAD(+) = 4-methyl-2-oxopentanoate + CO2 + NADH. It functions in the pathway amino-acid biosynthesis; L-leucine biosynthesis; L-leucine from 3-methyl-2-oxobutanoate: step 3/4. Its function is as follows. Catalyzes the oxidation of 3-carboxy-2-hydroxy-4-methylpentanoate (3-isopropylmalate) to 3-carboxy-4-methyl-2-oxopentanoate. The product decarboxylates to 4-methyl-2 oxopentanoate. The polypeptide is 3-isopropylmalate dehydrogenase (leuB) (Priestia megaterium (strain DSM 319 / IMG 1521) (Bacillus megaterium)).